The chain runs to 290 residues: Sodium/potassium-transporting ATPase subunit beta-2 (290 aa).

Topologically, residues 1-39 (MVIQKEKKSCGQVVEEWKEFVWNPRTHQFMGRTGTSWAF) are cytoplasmic. The chain crosses the membrane as a helical; Signal-anchor for type II membrane protein span at residues 40-67 (ILLFYLVFYGFLTAMFTLTMWVMLQTVS). The Extracellular portion of the chain corresponds to 68–290 (DHTPKYQDRL…VAFKLRINKA (223 aa)). N-linked (GlcNAc...) asparagine glycosylation is found at Asn96 and Asn118. Cysteines 129 and 150 form a disulfide. N-linked (GlcNAc...) asparagine glycosylation is found at Asn153 and Asn159. Cys160 and Cys177 are oxidised to a cystine. 3 N-linked (GlcNAc...) asparagine glycosylation sites follow: Asn193, Asn197, and Asn238. The segment at 193 to 290 (NQSMNVTCVG…VAFKLRINKA (98 aa)) is immunoglobulin-like. Cys200 and Cys261 are joined by a disulfide.

This sequence belongs to the X(+)/potassium ATPases subunit beta family. The sodium/potassium-transporting ATPase is composed of a catalytic alpha subunit, an auxiliary non-catalytic beta subunit and an additional regulatory subunit. Interacts with isoform 2 of BSG. Highly expressed in brain (at protein level).

The protein localises to the cell membrane. Functionally, this is the non-catalytic component of the active enzyme, which catalyzes the hydrolysis of ATP coupled with the exchange of Na(+) and K(+) ions across the plasma membrane. The exact function of the beta-2 subunit is not known. Its function is as follows. Mediates cell adhesion of neurons and astrocytes, and promotes neurite outgrowth. The chain is Sodium/potassium-transporting ATPase subunit beta-2 (Atp1b2) from Rattus norvegicus (Rat).